The following is a 224-amino-acid chain: Ras-related protein RABA4b (224 aa).

Ala2 bears the N-acetylalanine mark. Residue 24 to 31 (GDSAVGKS) coordinates GTP. The Effector region motif lies at 46–54 (SKATIGVEF). Residues 72–76 (DTAGQ), 130–133 (NKSD), and 160–161 (SA) each bind GTP. S-geranylgeranyl cysteine attachment occurs at residues Cys220 and Cys221.

Belongs to the small GTPase superfamily. Rab family. Interacts with TCTP1. In terms of tissue distribution, expressed in roots, stems, leaves and flowers. Expressed in tips of growing root hair cells.

The protein localises to the early endosome membrane. It is found in the golgi apparatus. It localises to the trans-Golgi network membrane. Its function is as follows. Regulator of membrane trafficking. May be required for secretion of cell wall components in cells. The sequence is that of Ras-related protein RABA4b from Arabidopsis thaliana (Mouse-ear cress).